The sequence spans 140 residues: Histone H2A.Z-specific chaperone CHZ1 (140 aa).

2 stretches are compositionally biased toward basic and acidic residues: residues 1–28 (MAEK…GEKH) and 37–51 (NYDE…DDAQ). Disordered stretches follow at residues 1-73 (MAEK…DEKL) and 118-140 (AEGA…DGEG). 2 stretches are compositionally biased toward acidic residues: residues 61–72 (SDADDSDADDEK) and 125–140 (VDDD…DGEG).

Belongs to the CHZ1 family. In terms of assembly, forms a heterotrimer with H2A.Z-H2B, stabilizing the association of the histone dimer. Also, with a lower affinity, forms a heterotrimer with H2A-H2B.

Its subcellular location is the nucleus. Functionally, forms a chaperone-bound H2A.Z-H2B complex that acts as a source for SWR1 complex-dependent H2A to H2A.Z histone replacement in chromatin. The protein is Histone H2A.Z-specific chaperone CHZ1 (CHZ1) of Eremothecium gossypii (strain ATCC 10895 / CBS 109.51 / FGSC 9923 / NRRL Y-1056) (Yeast).